Reading from the N-terminus, the 235-residue chain is 15,16-dihydrobiliverdin:ferredoxin oxidoreductase (235 aa).

This sequence belongs to the HY2 family.

The catalysed reaction is 15,16-dihydrobiliverdin + oxidized 2[4Fe-4S]-[ferredoxin] = biliverdin IXalpha + reduced 2[4Fe-4S]-[ferredoxin] + 2 H(+). In terms of biological role, catalyzes the two-electron reduction of biliverdin IX-alpha at the C15 methine bridge. The chain is 15,16-dihydrobiliverdin:ferredoxin oxidoreductase from Synechococcus sp. (strain CC9605).